The chain runs to 622 residues: V-type ATP synthase subunit I 1 (622 aa).

8 consecutive transmembrane segments (helical) span residues 306-326 (WVNL…YWEV), 328-348 (ISGF…ADAG), 373-393 (PAWC…ALVC), 428-448 (QMHV…LIVV), 459-479 (AEFG…NLIV), 485-505 (PLTG…FIFV), 532-552 (VFAD…GGAI), and 562-582 (PLFA…GHGL).

It belongs to the V-ATPase 116 kDa subunit family.

The protein localises to the cell membrane. Functionally, produces ATP from ADP in the presence of a proton gradient across the membrane. In Treponema pallidum (strain Nichols), this protein is V-type ATP synthase subunit I 1 (atpI1).